The sequence spans 258 residues: Protein STAY-GREEN LIKE, chloroplastic (258 aa).

It belongs to the staygreen family. Strongly expressed in leaves, stems and panicles, and at lower levels in roots and seeds.

Functionally, promotes chlorophyll degradation in leaves. May be involved in LHCI proteins degradation, regulating the balance between LHCI and LHCII. The chain is Protein STAY-GREEN LIKE, chloroplastic from Oryza sativa subsp. japonica (Rice).